Consider the following 204-residue polypeptide: Protein PAXX (204 aa).

The 43-residue stretch at F37–A79 folds into the PISA domain. Residue S134 is modified to Phosphoserine. The tract at residues E143–T204 is disordered. At T145 the chain carries Phosphothreonine. 2 positions are modified to phosphoserine: S148 and S152. The tract at residues G171–T204 is mediates interaction with XRCC5/Ku80 and XRCC6/Ku70 and association with the non-homologous end joining core complex. The short motif at F190–T204 is the XLM element.

This sequence belongs to the XRCC4-XLF family. PAXX subfamily. As to quaternary structure, homodimer. Interacts with the DNA-bound XRCC5/Ku80 and XRCC6/Ku70 heterodimer (Ku complex); the interaction is direct. Associated component of the non-homologous end joining (NHEJ) complex, composed of the core proteins PRKDC, LIG4, XRCC4, XRCC6/Ku70, XRCC5/Ku86 and NHEJ1/XLF. Interacts with POLL (DNA polymerase lambda); promoting POLL recruitment to double-strand breaks (DSBs) and stimulation of the end-filling activity of POLL. Phosphorylation may inhibit interaction with the DNA-bound XRCC5/Ku80 and XRCC6/Ku70 heterodimer (Ku complex).

It is found in the nucleus. It localises to the chromosome. Its subcellular location is the cytoplasm. Non-essential DNA repair protein involved in DNA non-homologous end joining (NHEJ); participates in double-strand break (DSB) repair and V(D)J recombination. May act as a scaffold required for accumulation of the Ku heterodimer, composed of XRCC5/Ku80 and XRCC6/Ku70, at double-strand break sites and promote the assembly and/or stability of the NHEJ machinery. Involved in NHEJ by promoting the ligation of blunt-ended DNA ends. Together with NHEJ1/XLF, collaborates with DNA polymerase lambda (POLL) to promote joining of non-cohesive DNA ends. Constitutes a non-essential component of classical NHEJ: has a complementary but distinct function with NHEJ1/XLF in DNA repair. Able to restrict infection by herpesvirus 1 (HSV-1) via an unknown mechanism. The polypeptide is Protein PAXX (Homo sapiens (Human)).